A 211-amino-acid polypeptide reads, in one-letter code: GTP-binding protein ypt5 (211 aa).

GTP is bound at residue 21–28 (GDSAVGKS). An Effector region motif is present at residues 43-51 (RESTIGAAF). GTP-binding positions include 70–74 (DTAGQ) and 128–131 (NKLD). S-geranylgeranyl cysteine attachment occurs at residues Cys-209 and Cys-211. Cys-211 is subject to Cysteine methyl ester.

This sequence belongs to the small GTPase superfamily. Rab family.

The protein resides in the cell membrane. In terms of biological role, protein transport. Probably involved in vesicular traffic. The sequence is that of GTP-binding protein ypt5 (ypt5) from Schizosaccharomyces pombe (strain 972 / ATCC 24843) (Fission yeast).